The sequence spans 437 residues: GTPase Obg (437 aa).

Residues 2–160 (SMFLDTAKIS…RQLELELKIL (159 aa)) form the Obg domain. The region spanning 161–338 (ADVGLVGFPS…LLEATAELLA (178 aa)) is the OBG-type G domain. Residues 167 to 174 (GFPSVGKS), 192 to 196 (FTTIV), 214 to 217 (DLPG), 284 to 287 (NKMD), and 319 to 321 (SSL) each bind GTP. Ser-174 and Thr-194 together coordinate Mg(2+). The OCT domain occupies 359-437 (GFAETEKDFE…IGKFEFEFVD (79 aa)).

It belongs to the TRAFAC class OBG-HflX-like GTPase superfamily. OBG GTPase family. Monomer. Mg(2+) is required as a cofactor.

The protein resides in the cytoplasm. Its function is as follows. An essential GTPase which binds GTP, GDP and possibly (p)ppGpp with moderate affinity, with high nucleotide exchange rates and a fairly low GTP hydrolysis rate. Plays a role in control of the cell cycle, stress response, ribosome biogenesis and in those bacteria that undergo differentiation, in morphogenesis control. This is GTPase Obg from Streptococcus pyogenes serotype M4 (strain MGAS10750).